The primary structure comprises 146 residues: Hemoglobin subunit delta (146 aa).

A Globin domain is found at 2–146; that stretch reads HLTGEEKSAV…VATALAHKYH (145 aa). The heme b site is built by His-63 and His-92.

The protein belongs to the globin family. In terms of assembly, heterotetramer of two delta chains and two alpha chains. As to expression, red blood cells.

The polypeptide is Hemoglobin subunit delta (HBD) (Ateles fusciceps (Brown-headed spider monkey)).